The primary structure comprises 682 residues: tRNA(Met) cytidine acetyltransferase TmcA (682 aa).

ATP is bound by residues Gln176, 198–207, and Arg320; that span reads GRGKSTLAGM. The region spanning 357-534 is the N-acetyltransferase domain; the sequence is QQQWIQQPEL…SGCYTAMAIF (178 aa). Acetyl-CoA is bound by residues 462 to 464 and Glu502; that span reads VAV.

It belongs to the RNA cytidine acetyltransferase family. TmcA subfamily.

It is found in the cytoplasm. It catalyses the reaction cytidine(34) in elongator tRNA(Met) + acetyl-CoA + ATP + H2O = N(4)-acetylcytidine(34) in elongator tRNA(Met) + ADP + phosphate + CoA + H(+). In terms of biological role, catalyzes the formation of N(4)-acetylcytidine (ac(4)C) at the wobble position of tRNA(Met), by using acetyl-CoA as an acetyl donor and ATP (or GTP). In Photorhabdus asymbiotica subsp. asymbiotica (strain ATCC 43949 / 3105-77) (Xenorhabdus luminescens (strain 2)), this protein is tRNA(Met) cytidine acetyltransferase TmcA.